A 60-amino-acid chain; its full sequence is uncharacterized protein (60 aa).

This is an uncharacterized protein from Emericella nidulans (strain FGSC A4 / ATCC 38163 / CBS 112.46 / NRRL 194 / M139) (Aspergillus nidulans).